The following is a 149-amino-acid chain: Nucleoside diphosphate kinase 1 (149 aa).

Residue methionine 1 is modified to N-acetylmethionine. ATP is bound by residues lysine 9, phenylalanine 57, arginine 85, threonine 91, arginine 102, and asparagine 112. The active-site Pros-phosphohistidine intermediate is the histidine 115.

This sequence belongs to the NDK family. As to quaternary structure, interacts with CAT1, CAT2 and CAT3. It depends on Mg(2+) as a cofactor.

Its subcellular location is the peroxisome. It is found in the nucleus. The protein localises to the cytoplasm. It catalyses the reaction a 2'-deoxyribonucleoside 5'-diphosphate + ATP = a 2'-deoxyribonucleoside 5'-triphosphate + ADP. The enzyme catalyses a ribonucleoside 5'-diphosphate + ATP = a ribonucleoside 5'-triphosphate + ADP. In terms of biological role, major role in the synthesis of nucleoside triphosphates other than ATP. The ATP gamma phosphate is transferred to the NDP beta phosphate via a ping-pong mechanism, using a phosphorylated active-site intermediate. Plays a role in response to reactive oxygen species (ROS) stress. This is Nucleoside diphosphate kinase 1 (NDK1) from Arabidopsis thaliana (Mouse-ear cress).